The primary structure comprises 165 residues: Cyclic pyranopterin monophosphate synthase (165 aa).

Substrate is bound by residues 76–78 (LCH) and 114–115 (ME). The active site involves D129.

It belongs to the MoaC family. In terms of assembly, homohexamer; trimer of dimers.

The catalysed reaction is (8S)-3',8-cyclo-7,8-dihydroguanosine 5'-triphosphate = cyclic pyranopterin phosphate + diphosphate. Its pathway is cofactor biosynthesis; molybdopterin biosynthesis. In terms of biological role, catalyzes the conversion of (8S)-3',8-cyclo-7,8-dihydroguanosine 5'-triphosphate to cyclic pyranopterin monophosphate (cPMP). The sequence is that of Cyclic pyranopterin monophosphate synthase from Brucella abortus (strain 2308).